The chain runs to 325 residues: Phospho-N-acetylmuramoyl-pentapeptide-transferase (325 aa).

10 consecutive transmembrane segments (helical) span residues 5–25 (VLLLTLILSFVITVILSPIFI), 57–77 (LMILLSILVSSLFVSFQLSIF), 81–101 (VLLLLLVTIGFGVLGFIDDFI), 117–137 (LIGQLVVAVLFYLGLRNMGLS), 146–166 (SLSIDFGWFYLPLVIVMLVGA), 178–198 (GLVAGTGAIAFGAFAIIAWAT), 200–220 (YFEVAIFSAAVVGAVLGFLVF), 227–247 (VFMGDTGSLALGGAIAAIAIM), 252–272 (ILLIIIGGVFVIETLSVIIQV), and 304–324 (VTFWTVGLLFAMLAIYLEVWI).

Belongs to the glycosyltransferase 4 family. MraY subfamily. Mg(2+) is required as a cofactor.

It is found in the cell membrane. It catalyses the reaction UDP-N-acetyl-alpha-D-muramoyl-L-alanyl-gamma-D-glutamyl-meso-2,6-diaminopimeloyl-D-alanyl-D-alanine + di-trans,octa-cis-undecaprenyl phosphate = di-trans,octa-cis-undecaprenyl diphospho-N-acetyl-alpha-D-muramoyl-L-alanyl-D-glutamyl-meso-2,6-diaminopimeloyl-D-alanyl-D-alanine + UMP. Its pathway is cell wall biogenesis; peptidoglycan biosynthesis. Functionally, catalyzes the initial step of the lipid cycle reactions in the biosynthesis of the cell wall peptidoglycan: transfers peptidoglycan precursor phospho-MurNAc-pentapeptide from UDP-MurNAc-pentapeptide onto the lipid carrier undecaprenyl phosphate, yielding undecaprenyl-pyrophosphoryl-MurNAc-pentapeptide, known as lipid I. In Halalkalibacterium halodurans (strain ATCC BAA-125 / DSM 18197 / FERM 7344 / JCM 9153 / C-125) (Bacillus halodurans), this protein is Phospho-N-acetylmuramoyl-pentapeptide-transferase.